We begin with the raw amino-acid sequence, 390 residues long: NADH-quinone oxidoreductase subunit D (390 aa).

Belongs to the complex I 49 kDa subunit family. As to quaternary structure, NDH-1 is composed of 14 different subunits. Subunits NuoB, C, D, E, F, and G constitute the peripheral sector of the complex.

It localises to the cell inner membrane. The enzyme catalyses a quinone + NADH + 5 H(+)(in) = a quinol + NAD(+) + 4 H(+)(out). NDH-1 shuttles electrons from NADH, via FMN and iron-sulfur (Fe-S) centers, to quinones in the respiratory chain. The immediate electron acceptor for the enzyme in this species is believed to be ubiquinone. Couples the redox reaction to proton translocation (for every two electrons transferred, four hydrogen ions are translocated across the cytoplasmic membrane), and thus conserves the redox energy in a proton gradient. The sequence is that of NADH-quinone oxidoreductase subunit D from Trichlorobacter lovleyi (strain ATCC BAA-1151 / DSM 17278 / SZ) (Geobacter lovleyi).